Consider the following 350-residue polypeptide: Probable DNA polymerase III subunit delta (350 aa).

This sequence belongs to the DNA polymerase HolA subunit family. In terms of assembly, component of the DNA clamp loading complex consisting of tau(3):delta(1):delta'(1). The DNA polymerase III holoenzyme complex contains at least 10 different subunits organized into 3 functionally essential subassemblies: the Pol III core, the beta sliding clamp processivity factor and the clamp-loading complex. The Pol III core (subunits alpha, epsilon and theta) contains the polymerase and the 3'-5' exonuclease proofreading activities. The polymerase is tethered to the template via the dimeric beta sliding clamp processivity factor. The DNA clamp-loading complex assembles the beta sliding clamp onto the primed template and plays a central role in the organization and communication at the replication fork.

It catalyses the reaction DNA(n) + a 2'-deoxyribonucleoside 5'-triphosphate = DNA(n+1) + diphosphate. Functionally, part of the beta sliding clamp loading complex, which hydrolyzes ATP to load the beta clamp onto primed DNA to form the DNA replication pre-initiation complex. DNA polymerase III is a complex, multichain enzyme responsible for most of the replicative synthesis in bacteria. This DNA polymerase also exhibits 3'-5' exonuclease activity. The delta subunit is the wrench that will open the beta subunit dimer. The DNA clamp loading complex (tau(3),delta,delta') is thought to load beta dimers onto DNA by binding ATP which alters the complex's conformation so it can bind beta sliding clamp dimers and open them at one interface. Primed DNA is recognized, ATP is hydrolyzed releasing the clamp loading complex and closing the beta sliding clamp ring around the primed DNA. In Aquifex aeolicus (strain VF5), this protein is Probable DNA polymerase III subunit delta.